Here is a 163-residue protein sequence, read N- to C-terminus: Large ribosomal subunit protein bL17 (163 aa).

The disordered stretch occupies residues 127–163 (VAKKATRTRRSKKSAEAAAPAAVEAPATEEPKAESAE). Positions 129 to 138 (KKATRTRRSK) are enriched in basic residues. A compositionally biased stretch (low complexity) spans 142–154 (EAAAPAAVEAPAT).

Belongs to the bacterial ribosomal protein bL17 family. In terms of assembly, part of the 50S ribosomal subunit. Contacts protein L32.

The protein is Large ribosomal subunit protein bL17 of Bacteroides thetaiotaomicron (strain ATCC 29148 / DSM 2079 / JCM 5827 / CCUG 10774 / NCTC 10582 / VPI-5482 / E50).